The sequence spans 387 residues: 3-ketoacyl-CoA thiolase (387 aa).

The Acyl-thioester intermediate role is filled by Cys91. Catalysis depends on proton acceptor residues His343 and Cys373.

The protein belongs to the thiolase-like superfamily. Thiolase family. Heterotetramer of two alpha chains (FadB) and two beta chains (FadA).

It is found in the cytoplasm. It carries out the reaction an acyl-CoA + acetyl-CoA = a 3-oxoacyl-CoA + CoA. It participates in lipid metabolism; fatty acid beta-oxidation. Catalyzes the final step of fatty acid oxidation in which acetyl-CoA is released and the CoA ester of a fatty acid two carbons shorter is formed. In Shigella flexneri serotype 5b (strain 8401), this protein is 3-ketoacyl-CoA thiolase.